We begin with the raw amino-acid sequence, 456 residues long: Septin-10 (456 aa).

A Septin-type G domain is found at 40–306; that stretch reads QGFCFNILCV…ELYRRCKLQE (267 aa). The G1 motif stretch occupies residues 50 to 57; that stretch reads GETGIGKS. GTP contacts are provided by residues 50–57, Gly-105, 186–194, Gly-240, and Arg-255; these read GETGIGKS and KADTISKSE. Residues 102-105 form a G3 motif region; it reads NTVG. Residues 185 to 188 form a G4 motif region; the sequence is AKAD. Phosphoserine is present on Ser-418.

The protein belongs to the TRAFAC class TrmE-Era-EngA-EngB-Septin-like GTPase superfamily. Septin GTPase family. In terms of assembly, septins polymerize into heterooligomeric protein complexes that form filaments, and can associate with cellular membranes, actin filaments and microtubules. GTPase activity is required for filament formation. Interacts with ADGB. Proteolytically cleaved in vitro in a calmodulin-dependent manner.

It localises to the cytoplasm. The protein resides in the cytoskeleton. It is found in the cell projection. The protein localises to the cilium. Its subcellular location is the flagellum. In terms of biological role, filament-forming cytoskeletal GTPase. May play a role in cytokinesis (Potential). The polypeptide is Septin-10 (Rattus norvegicus (Rat)).